The primary structure comprises 298 residues: Ribosomal protein L11 methyltransferase (298 aa).

The S-adenosyl-L-methionine site is built by Thr152, Gly173, Asp195, and Asn234.

Belongs to the methyltransferase superfamily. PrmA family.

Its subcellular location is the cytoplasm. It catalyses the reaction L-lysyl-[protein] + 3 S-adenosyl-L-methionine = N(6),N(6),N(6)-trimethyl-L-lysyl-[protein] + 3 S-adenosyl-L-homocysteine + 3 H(+). Functionally, methylates ribosomal protein L11. The protein is Ribosomal protein L11 methyltransferase of Ralstonia nicotianae (strain ATCC BAA-1114 / GMI1000) (Ralstonia solanacearum).